Consider the following 269-residue polypeptide: Undecaprenyl-diphosphatase (269 aa).

8 helical membrane passes run 1–21 (MSIF…FLPI), 39–59 (LPIL…CTVF), 86–106 (LMMI…GLLL), 112–132 (TIDI…LIAS), 144–164 (VTLL…IPGI), 184–204 (AGEF…ILEI), 210–230 (LLAG…FVVG), and 249–269 (FAFY…GFAG).

This sequence belongs to the UppP family.

It localises to the cell inner membrane. It catalyses the reaction di-trans,octa-cis-undecaprenyl diphosphate + H2O = di-trans,octa-cis-undecaprenyl phosphate + phosphate + H(+). Functionally, catalyzes the dephosphorylation of undecaprenyl diphosphate (UPP). Confers resistance to bacitracin. The polypeptide is Undecaprenyl-diphosphatase (Treponema denticola (strain ATCC 35405 / DSM 14222 / CIP 103919 / JCM 8153 / KCTC 15104)).